Consider the following 20-residue polypeptide: Cytochrome P450 2A7 (20 aa).

Belongs to the cytochrome P450 family. The cofactor is heme.

It is found in the endoplasmic reticulum membrane. The protein localises to the microsome membrane. The catalysed reaction is an organic molecule + reduced [NADPH--hemoprotein reductase] + O2 = an alcohol + oxidized [NADPH--hemoprotein reductase] + H2O + H(+). Functionally, exhibits a high coumarin 7-hydroxylase activity. The sequence is that of Cytochrome P450 2A7 (CYP2A7) from Papio sp. (Baboon).